The chain runs to 488 residues: Protein nucleotidyltransferase YdiU (488 aa).

ATP contacts are provided by glycine 91, glycine 93, arginine 94, lysine 114, aspartate 126, glycine 127, arginine 177, and arginine 184. The disordered stretch occupies residues 108–127 (RFDIQLKGSGPTPYSRRGDG). Aspartate 253 acts as the Proton acceptor in catalysis. Mg(2+) contacts are provided by asparagine 254 and aspartate 263. Aspartate 263 provides a ligand contact to ATP.

It belongs to the SELO family. Requires Mg(2+) as cofactor. It depends on Mn(2+) as a cofactor.

The catalysed reaction is L-seryl-[protein] + ATP = 3-O-(5'-adenylyl)-L-seryl-[protein] + diphosphate. The enzyme catalyses L-threonyl-[protein] + ATP = 3-O-(5'-adenylyl)-L-threonyl-[protein] + diphosphate. It carries out the reaction L-tyrosyl-[protein] + ATP = O-(5'-adenylyl)-L-tyrosyl-[protein] + diphosphate. It catalyses the reaction L-histidyl-[protein] + UTP = N(tele)-(5'-uridylyl)-L-histidyl-[protein] + diphosphate. The catalysed reaction is L-seryl-[protein] + UTP = O-(5'-uridylyl)-L-seryl-[protein] + diphosphate. The enzyme catalyses L-tyrosyl-[protein] + UTP = O-(5'-uridylyl)-L-tyrosyl-[protein] + diphosphate. In terms of biological role, nucleotidyltransferase involved in the post-translational modification of proteins. It can catalyze the addition of adenosine monophosphate (AMP) or uridine monophosphate (UMP) to a protein, resulting in modifications known as AMPylation and UMPylation. The protein is Protein nucleotidyltransferase YdiU of Bacillus anthracis (strain A0248).